We begin with the raw amino-acid sequence, 418 residues long: AA14 family lytic polysaccharide monooxygenase B (418 aa).

An N-terminal signal peptide occupies residues 1–18 (MIPVFLAAVAAFLPLTSG). Residues asparagine 31, asparagine 94, and asparagine 151 are each glycosylated (N-linked (GlcNAc...) asparagine). Intrachain disulfides connect cysteine 85-cysteine 108, cysteine 127-cysteine 154, cysteine 171-cysteine 176, and cysteine 178-cysteine 200. N-linked (GlcNAc...) asparagine glycosylation is found at asparagine 201 and asparagine 235. A disulfide bridge connects residues cysteine 220 and cysteine 236. The span at 307 to 343 (AAATPAPSSSGSSPSSSSPGSSSTASTTSTSGPRPSA) shows a compositional bias: low complexity. Residues 307–364 (AAATPAPSSSGSSPSSSSPGSSSTASTTSTSGPRPSARGFRRSTGERPPTGVPTPRKS) are disordered.

It belongs to the polysaccharide monooxygenase AA14 family. Cu(2+) is required as a cofactor.

Its subcellular location is the secreted. Functionally, lytic polysaccharide monooxygenase (LPMO) that oxidatively cleaves xylan with both C1 and C4 regioselectivity and that specifically targets the protective shield made by heteroxylans that cover cellulose microfibrils in wood. Catalysis by LPMOs requires the reduction of the active-site copper from Cu(II) to Cu(I) by a reducing agent and H(2)O(2) or O(2) as a cosubstrate. Cleavage occurs only when xylans are bound to cellulose and not when they are in solution. Increases the efficiency of wood saccharification through oxidative cleavage of highly refractory xylan-coated cellulose fibers via synergistic relationship with xylan-active enzymes, xylobiohydrolases and cellobiohydrolases. This chain is AA14 family lytic polysaccharide monooxygenase B, found in Trametes coccinea (strain BRFM310) (Pycnoporus coccineus).